Consider the following 268-residue polypeptide: Protein atz-1 (268 aa).

Residues 171–243 (VDDANKLTEV…EEGEEDYEEE (73 aa)) are a coiled coil. The segment at 229–268 (DLMKEEEGEEDYEEEENYEVEEDFEDEEEYDEEGEEEDYE) is disordered. Positions 231–268 (MKEEEGEEDYEEEENYEVEEDFEDEEEYDEEGEEEDYE) are enriched in acidic residues.

It is found in the nucleus. In terms of biological role, plays a role in meiosis, germline development and oocyte morphogenesis. May play a role in DNA replication. In the germline, involved in the maintenance of transition zone nuclei and in chromosome structure and organization, but not required for mitotic proliferation. The chain is Protein atz-1 from Caenorhabditis elegans.